Reading from the N-terminus, the 338-residue chain is MRIIGIETSCDETGIAIYDDEQGLLSHQLYSQVKLHADYGGVVPELASRDHVKKTIPLIKAALAEANLTSKDIDGVAYTAGPGLVGALLVGATIGRSIAYAWGVPAVPVHHMEGHLLAPMLEDNPPPFPFVALLVSGGHTMMVEVKGIGEYRILGESIDDAAGEAFDKTAKLMGLDYPGGPLLSRLAEKGTPGRFKFPRPMTDRPGLDMSFSGLKTFAANTIRANDNDDQTRADIAYAFQEAVCATLVIKCKRALVETGMKRIVIAGGVSANKQLRVELEALAKKIGGEVYYPRTEFCTDNGAMIAYAGMQRLKNGETADLSVHATPRWPIDQLEPIV.

The Fe cation site is built by His-111 and His-115. Substrate is bound by residues 134–138 (LVSGG), Asp-167, Gly-180, and Asn-272. Asp-300 lines the Fe cation pocket.

This sequence belongs to the KAE1 / TsaD family. Requires Fe(2+) as cofactor.

The protein resides in the cytoplasm. It catalyses the reaction L-threonylcarbamoyladenylate + adenosine(37) in tRNA = N(6)-L-threonylcarbamoyladenosine(37) in tRNA + AMP + H(+). Required for the formation of a threonylcarbamoyl group on adenosine at position 37 (t(6)A37) in tRNAs that read codons beginning with adenine. Is involved in the transfer of the threonylcarbamoyl moiety of threonylcarbamoyl-AMP (TC-AMP) to the N6 group of A37, together with TsaE and TsaB. TsaD likely plays a direct catalytic role in this reaction. This chain is tRNA N6-adenosine threonylcarbamoyltransferase, found in Vibrio atlanticus (strain LGP32) (Vibrio splendidus (strain Mel32)).